We begin with the raw amino-acid sequence, 172 residues long: Ribosome maturation factor RimM (172 aa).

A PRC barrel domain is found at 96 to 168; that stretch reads EGEFYYHQII…RVDVELMEGL (73 aa).

The protein belongs to the RimM family. As to quaternary structure, binds ribosomal protein uS19.

It is found in the cytoplasm. An accessory protein needed during the final step in the assembly of 30S ribosomal subunit, possibly for assembly of the head region. Essential for efficient processing of 16S rRNA. May be needed both before and after RbfA during the maturation of 16S rRNA. It has affinity for free ribosomal 30S subunits but not for 70S ribosomes. The protein is Ribosome maturation factor RimM of Streptococcus pyogenes serotype M3 (strain ATCC BAA-595 / MGAS315).